Reading from the N-terminus, the 241-residue chain is Probable transcriptional regulatory protein Mpe_A1337 (241 aa).

Residues 1-20 (MAGHSKWANIQHRKGRQDEK) are disordered.

Belongs to the TACO1 family.

Its subcellular location is the cytoplasm. This chain is Probable transcriptional regulatory protein Mpe_A1337, found in Methylibium petroleiphilum (strain ATCC BAA-1232 / LMG 22953 / PM1).